The primary structure comprises 152 residues: Large ribosomal subunit protein bL9 (152 aa).

Belongs to the bacterial ribosomal protein bL9 family.

Binds to the 23S rRNA. The protein is Large ribosomal subunit protein bL9 of Prochlorococcus marinus (strain NATL2A).